We begin with the raw amino-acid sequence, 158 residues long: Large ribosomal subunit protein uL15 (158 aa).

Disordered stretches follow at residues 1–53 (MRIH…FEGG) and 138–158 (ESAG…SNNE). The segment covering 23 to 35 (ISAGQGASGGFGM) has biased composition (gly residues). Polar residues predominate over residues 145–158 (QDLSDTSNAPSNNE).

It belongs to the universal ribosomal protein uL15 family. In terms of assembly, part of the 50S ribosomal subunit.

Functionally, binds to the 23S rRNA. The protein is Large ribosomal subunit protein uL15 of Crocosphaera subtropica (strain ATCC 51142 / BH68) (Cyanothece sp. (strain ATCC 51142)).